The chain runs to 187 residues: Ribosome maturation factor RimM (187 aa).

Positions glutamate 96 to glycine 169 constitute a PRC barrel domain.

Belongs to the RimM family. In terms of assembly, binds ribosomal protein uS19.

It localises to the cytoplasm. Functionally, an accessory protein needed during the final step in the assembly of 30S ribosomal subunit, possibly for assembly of the head region. Essential for efficient processing of 16S rRNA. May be needed both before and after RbfA during the maturation of 16S rRNA. It has affinity for free ribosomal 30S subunits but not for 70S ribosomes. The sequence is that of Ribosome maturation factor RimM from Sinorhizobium medicae (strain WSM419) (Ensifer medicae).